The chain runs to 337 residues: Protein RecA (337 aa).

Residue 66-73 coordinates ATP; sequence GPESSGKT.

The protein belongs to the RecA family.

It localises to the cytoplasm. In terms of biological role, can catalyze the hydrolysis of ATP in the presence of single-stranded DNA, the ATP-dependent uptake of single-stranded DNA by duplex DNA, and the ATP-dependent hybridization of homologous single-stranded DNAs. It interacts with LexA causing its activation and leading to its autocatalytic cleavage. In Mesomycoplasma hyopneumoniae (strain J / ATCC 25934 / NCTC 10110) (Mycoplasma hyopneumoniae), this protein is Protein RecA.